We begin with the raw amino-acid sequence, 689 residues long: Glycine--tRNA ligase beta subunit (689 aa).

Belongs to the class-II aminoacyl-tRNA synthetase family. As to quaternary structure, tetramer of two alpha and two beta subunits.

The protein resides in the cytoplasm. The catalysed reaction is tRNA(Gly) + glycine + ATP = glycyl-tRNA(Gly) + AMP + diphosphate. This chain is Glycine--tRNA ligase beta subunit, found in Shewanella putrefaciens (strain CN-32 / ATCC BAA-453).